A 191-amino-acid chain; its full sequence is tRNA-specific adenosine deaminase 2 (191 aa).

The CMP/dCMP-type deaminase domain maps to 20–145 (EETEKWMEQA…SVLDIASADL (126 aa)). His71 contacts Zn(2+). The Proton donor role is filled by Glu73. Residues Cys107 and Cys110 each coordinate Zn(2+).

This sequence belongs to the cytidine and deoxycytidylate deaminase family. ADAT2 subfamily. Zn(2+) serves as cofactor.

The enzyme catalyses adenosine(34) in tRNA + H2O + H(+) = inosine(34) in tRNA + NH4(+). In terms of biological role, probably participates in deamination of adenosine-34 to inosine in many tRNAs. The sequence is that of tRNA-specific adenosine deaminase 2 (DEADC1) from Bos taurus (Bovine).